The chain runs to 107 residues: Iron-binding protein IscA (107 aa).

Fe cation is bound by residues Cys35, Cys99, and Cys101.

The protein belongs to the HesB/IscA family. Homodimer; may form tetramers and higher multimers. Fe cation is required as a cofactor.

Its function is as follows. Is able to transfer iron-sulfur clusters to apo-ferredoxin. Multiple cycles of [2Fe2S] cluster formation and transfer are observed, suggesting that IscA acts catalytically. Recruits intracellular free iron so as to provide iron for the assembly of transient iron-sulfur cluster in IscU in the presence of IscS, L-cysteine and the thioredoxin reductase system TrxA/TrxB. In Xenorhabdus nematophila (strain ATCC 19061 / DSM 3370 / CCUG 14189 / LMG 1036 / NCIMB 9965 / AN6), this protein is Iron-binding protein IscA.